The primary structure comprises 63 residues: Keratin-associated protein 19-8 (63 aa).

It belongs to the KRTAP type 19 family. In terms of assembly, interacts with hair keratins.

Its function is as follows. In the hair cortex, hair keratin intermediate filaments are embedded in an interfilamentous matrix, consisting of hair keratin-associated proteins (KRTAP), which are essential for the formation of a rigid and resistant hair shaft through their extensive disulfide bond cross-linking with abundant cysteine residues of hair keratins. The matrix proteins include the high-sulfur and high-glycine-tyrosine keratins. The protein is Keratin-associated protein 19-8 (KRTAP19-8) of Homo sapiens (Human).